The chain runs to 156 residues: ATP synthase subunit b (156 aa).

A helical transmembrane segment spans residues 7-27; that stretch reads LFAQMVVFLILAWFTMKFVWP.

This sequence belongs to the ATPase B chain family. As to quaternary structure, F-type ATPases have 2 components, F(1) - the catalytic core - and F(0) - the membrane proton channel. F(1) has five subunits: alpha(3), beta(3), gamma(1), delta(1), epsilon(1). F(0) has three main subunits: a(1), b(2) and c(10-14). The alpha and beta chains form an alternating ring which encloses part of the gamma chain. F(1) is attached to F(0) by a central stalk formed by the gamma and epsilon chains, while a peripheral stalk is formed by the delta and b chains.

Its subcellular location is the cell inner membrane. Functionally, f(1)F(0) ATP synthase produces ATP from ADP in the presence of a proton or sodium gradient. F-type ATPases consist of two structural domains, F(1) containing the extramembraneous catalytic core and F(0) containing the membrane proton channel, linked together by a central stalk and a peripheral stalk. During catalysis, ATP synthesis in the catalytic domain of F(1) is coupled via a rotary mechanism of the central stalk subunits to proton translocation. In terms of biological role, component of the F(0) channel, it forms part of the peripheral stalk, linking F(1) to F(0). The sequence is that of ATP synthase subunit b from Paraburkholderia phytofirmans (strain DSM 17436 / LMG 22146 / PsJN) (Burkholderia phytofirmans).